A 115-amino-acid polypeptide reads, in one-letter code: U3-lycotoxin-Ls1a (115 aa).

The first 20 residues, 1–20, serve as a signal peptide directing secretion; that stretch reads MKFVLLFGVFLVTLFSYSSA. Positions 21–44 are excised as a propeptide; sequence EMLDDFDQADEDELLSLIEKEEAR. Disulfide bonds link Cys-48/Cys-63, Cys-55/Cys-72, Cys-62/Cys-87, and Cys-74/Cys-85.

The protein belongs to the neurotoxin 19 (CSTX) family. 01 subfamily. As to expression, expressed by the venom gland.

Its subcellular location is the secreted. In Lycosa singoriensis (Wolf spider), this protein is U3-lycotoxin-Ls1a.